Consider the following 343-residue polypeptide: 3-oxopimeloyl-[acyl-carrier-protein] synthase (343 aa).

Catalysis depends on residues Cys132 and His272. Residues 273-277 (QANHR) are ACP-binding. The active site involves Asn302.

It belongs to the thiolase-like superfamily. BioZ family.

The enzyme catalyses malonyl-[ACP] + an acyl-CoA + H(+) = a 3-oxoacyl-[ACP] + CO2 + CoA. It catalyses the reaction glutaryl-CoA + malonyl-[ACP] + H(+) = 3-oxo-6-carboxyhexanoyl-[ACP] + CO2 + CoA. Its pathway is cofactor biosynthesis; biotin biosynthesis. Its function is as follows. Involved in the formation of the biotin precursor pimeloyl-ACP. Catalyzes the condensation of glutaryl-CoA, an intermediate in lysine degradation, with malonyl-ACP to produce 3-oxopimeloyl-ACP. This chain is 3-oxopimeloyl-[acyl-carrier-protein] synthase, found in Rhodothermus marinus (strain ATCC 43812 / DSM 4252 / R-10) (Rhodothermus obamensis).